Reading from the N-terminus, the 367-residue chain is Undecaprenyl-phosphate alpha-N-acetylglucosaminyl 1-phosphate transferase (367 aa).

A run of 10 helical transmembrane segments spans residues 3-23, 46-66, 69-89, 132-152, 158-178, 187-207, 213-233, 242-262, 294-314, and 318-338; these read LLTV…FLFF, LIPL…FGIV, YIPH…IGAL, VLGP…INAF, IDGL…MILW, IWCF…LGIL, VFMG…ILLE, ISPV…VAIM, AFVL…LAEY, and VPEW…GYCI.

It belongs to the glycosyltransferase 4 family. WecA subfamily. The cofactor is Mg(2+). Requires Mn(2+) as cofactor.

The protein localises to the cell inner membrane. The catalysed reaction is di-trans,octa-cis-undecaprenyl phosphate + UDP-N-acetyl-alpha-D-glucosamine = N-acetyl-alpha-D-glucosaminyl-di-trans,octa-cis-undecaprenyl diphosphate + UMP. It functions in the pathway bacterial outer membrane biogenesis; LPS O-antigen biosynthesis. Its pathway is bacterial outer membrane biogenesis; enterobacterial common antigen biosynthesis. Its function is as follows. Catalyzes the transfer of the GlcNAc-1-phosphate moiety from UDP-GlcNAc onto the carrier lipid undecaprenyl phosphate (C55-P), yielding GlcNAc-pyrophosphoryl-undecaprenyl (GlcNAc-PP-C55). The chain is Undecaprenyl-phosphate alpha-N-acetylglucosaminyl 1-phosphate transferase from Escherichia coli O157:H7.